The following is a 376-amino-acid chain: Cobalt-precorrin-5B C(1)-methyltransferase (376 aa).

It belongs to the CbiD family.

It catalyses the reaction Co-precorrin-5B + S-adenosyl-L-methionine = Co-precorrin-6A + S-adenosyl-L-homocysteine. It functions in the pathway cofactor biosynthesis; adenosylcobalamin biosynthesis; cob(II)yrinate a,c-diamide from sirohydrochlorin (anaerobic route): step 6/10. In terms of biological role, catalyzes the methylation of C-1 in cobalt-precorrin-5B to form cobalt-precorrin-6A. This chain is Cobalt-precorrin-5B C(1)-methyltransferase, found in Bradyrhizobium sp. (strain BTAi1 / ATCC BAA-1182).